Reading from the N-terminus, the 209-residue chain is PF03932 family protein CutC (209 aa).

This sequence belongs to the CutC family.

It is found in the cytoplasm. Its function is as follows. Might participate in the control of copper homeostasis; data from other bacteria suggests it is not involved. This Enterococcus faecalis (strain ATCC 700802 / V583) protein is PF03932 family protein CutC.